A 131-amino-acid chain; its full sequence is MSMSDPIADMLTRIRNAQMVEKVSVTMPSSKVKVAIAQVLKDEGYIDDFAVKSEGAKSELNIVLKYYAGRPVIERIERVSKPGLRVYRGRNDIPVVMNGLGVAIVSTPKGVMTDRKARATGVGGEVICYVA.

This sequence belongs to the universal ribosomal protein uS8 family. Part of the 30S ribosomal subunit. Contacts proteins S5 and S12.

Its function is as follows. One of the primary rRNA binding proteins, it binds directly to 16S rRNA central domain where it helps coordinate assembly of the platform of the 30S subunit. This Paraburkholderia xenovorans (strain LB400) protein is Small ribosomal subunit protein uS8.